Reading from the N-terminus, the 502-residue chain is Probable cytosol aminopeptidase (502 aa).

Positions 269 and 274 each coordinate Mn(2+). The active site involves Lys-281. Mn(2+) is bound by residues Asp-292, Asp-351, and Glu-353. Arg-355 is an active-site residue.

Belongs to the peptidase M17 family. Mn(2+) is required as a cofactor.

The protein localises to the cytoplasm. It catalyses the reaction Release of an N-terminal amino acid, Xaa-|-Yaa-, in which Xaa is preferably Leu, but may be other amino acids including Pro although not Arg or Lys, and Yaa may be Pro. Amino acid amides and methyl esters are also readily hydrolyzed, but rates on arylamides are exceedingly low.. It carries out the reaction Release of an N-terminal amino acid, preferentially leucine, but not glutamic or aspartic acids.. Presumably involved in the processing and regular turnover of intracellular proteins. Catalyzes the removal of unsubstituted N-terminal amino acids from various peptides. The polypeptide is Probable cytosol aminopeptidase (Shewanella sediminis (strain HAW-EB3)).